The chain runs to 99 residues: Small ribosomal subunit protein eS24 (99 aa).

The protein belongs to the eukaryotic ribosomal protein eS24 family.

This is Small ribosomal subunit protein eS24 from Methanothrix thermoacetophila (strain DSM 6194 / JCM 14653 / NBRC 101360 / PT) (Methanosaeta thermophila).